The primary structure comprises 162 residues: Cyclic pyranopterin monophosphate synthase (162 aa).

Residues 75–77 (LCH) and 113–114 (ME) each bind substrate. Residue D128 is part of the active site.

Belongs to the MoaC family. Homohexamer; trimer of dimers.

The enzyme catalyses (8S)-3',8-cyclo-7,8-dihydroguanosine 5'-triphosphate = cyclic pyranopterin phosphate + diphosphate. Its pathway is cofactor biosynthesis; molybdopterin biosynthesis. Functionally, catalyzes the conversion of (8S)-3',8-cyclo-7,8-dihydroguanosine 5'-triphosphate to cyclic pyranopterin monophosphate (cPMP). This is Cyclic pyranopterin monophosphate synthase from Burkholderia cenocepacia (strain ATCC BAA-245 / DSM 16553 / LMG 16656 / NCTC 13227 / J2315 / CF5610) (Burkholderia cepacia (strain J2315)).